Consider the following 446-residue polypeptide: WEB family protein At3g56270 (446 aa).

The stretch at 313–349 forms a coiled coil; that stretch reads TNVSRIEILRKLEEANEEVKQSKQALEVALNRVEIAS.

This sequence belongs to the WEB family.

This is WEB family protein At3g56270 from Arabidopsis thaliana (Mouse-ear cress).